The following is a 77-amino-acid chain: Conotoxin VnMKLT1-012 (77 aa).

The first 22 residues, 1 to 22 (MKLTCMMIVAVLFLTAWTFVTA), serve as a signal peptide directing secretion. The propeptide occupies 23-48 (DDSRNGLDYLFPKARHEMNPKASRDI). 3 disulfide bridges follow: C51–C68, C58–C72, and C67–C76.

Belongs to the conotoxin O1 superfamily. In terms of tissue distribution, expressed by the venom duct.

The protein resides in the secreted. The sequence is that of Conotoxin VnMKLT1-012 from Conus ventricosus (Mediterranean cone).